Consider the following 495-residue polypeptide: Glycerol kinase (495 aa).

Residue Thr14 participates in ADP binding. 3 residues coordinate ATP: Thr14, Thr15, and Ser16. Thr14 provides a ligand contact to sn-glycerol 3-phosphate. Residue Arg18 coordinates ADP. Sn-glycerol 3-phosphate-binding residues include Arg84, Glu85, Tyr136, and Asp246. Residues Arg84, Glu85, Tyr136, Asp246, and Gln247 each coordinate glycerol. Residues Thr268 and Gly312 each coordinate ADP. The ATP site is built by Thr268, Gly312, Gln316, and Gly413. Residues Gly413 and Asn417 each contribute to the ADP site.

It belongs to the FGGY kinase family.

The enzyme catalyses glycerol + ATP = sn-glycerol 3-phosphate + ADP + H(+). The protein operates within polyol metabolism; glycerol degradation via glycerol kinase pathway; sn-glycerol 3-phosphate from glycerol: step 1/1. With respect to regulation, inhibited by fructose 1,6-bisphosphate (FBP). In terms of biological role, key enzyme in the regulation of glycerol uptake and metabolism. Catalyzes the phosphorylation of glycerol to yield sn-glycerol 3-phosphate. The sequence is that of Glycerol kinase from Bdellovibrio bacteriovorus (strain ATCC 15356 / DSM 50701 / NCIMB 9529 / HD100).